The primary structure comprises 643 residues: Versicolorin B synthase (643 aa).

The propeptide occupies 1–41; that stretch reads MGRNWFQVTAMAVVPVVGIMAAVNPTILSSAASSLPSLGAM. FAD contacts are provided by residues 84-85 and 105-106; these read TA and EA. Asn-116 is a glycosylation site (N-linked (GlcNAc...) asparagine). An FAD-binding site is contributed by 171–174; that stretch reads GAML. Asn-221 and Asn-507 each carry an N-linked (GlcNAc...) asparagine glycan. Residues Ala-613 and 624 to 625 contribute to the FAD site; that span reads PM.

It belongs to the GMC oxidoreductase family. As to quaternary structure, homodimer. It depends on FAD as a cofactor. In terms of processing, N-glycosylated.

The protein resides in the cytoplasm. It localises to the cytosol. It carries out the reaction (2S-3S)-versiconal hemiacetal = versicolorin B + H2O. The enzyme catalyses (S)-5'-oxoaverantin + H(+) = (1'S,5'S)-averufin + H2O. It participates in mycotoxin biosynthesis; aflatoxin biosynthesis. Its function is as follows. Dual cyclase; part of the gene cluster that mediates the biosynthesis of aflatoxins, a group of polyketide-derived furanocoumarins, and part of the most toxic and carcinogenic compounds among the known mycotoxins. The four major aflatoxins produced by A.parasiticus are aflatoxin B1 (AFB1), aflatoxin B2 (AFB2), aflatoxin G1 (AFG1) and aflatoxin G2 (AFG2). Aflk plays a dual role within the aflatoxin pathway, as a 5'-oxoaverantin cyclase that mediates conversion of 5'-oxoaverantin (OAVN) to averufin (AVF), as well as a versicolorin B synthase that converts versiconal (VAL) to versicolorin B (VERB) by closing the bisfuran ring of aflatoxin which is required for DNA-binding, thus giving to aflatoxin its activity as a mutagen. The biosynthesis of aflatoxins begins with the norsolorinic acid synthase aflC that combines a hexanoyl starter unit produced by the fatty acid synthase aflA/aflB and 7 malonyl-CoA extender units to synthesize the precursor NOR. The second step is the conversion of NOR to averantin and requires the norsolorinic acid ketoreductase aflD, which catalyzes the dehydration of norsolorinic acid to form (1'S)-averantin. The norsolorinic acid reductases aflE and aflF may also play a role in the conversion of NOR to AVN. The cytochrome P450 monooxygenase aflG then catalyzes the hydroxylation of AVN to 5'hydroxyaverantin (HAVN). The next step is performed by the 5'-hydroxyaverantin dehydrogenase aflH that transforms HAVN to 5'-oxoaverantin (OAVN) which is further converted to averufin (AVF) by aflK that plays a dual role in the pathway, as a 5'-oxoaverantin cyclase that mediates conversion of 5'-oxoaverantin, as well as a versicolorin B synthase in a later step in the pathway. The averufin oxidase aflI catalyzes the conversion of AVF to versiconal hemiacetal acetate (VHA). VHA is then the substrate for the versiconal hemiacetal acetate esterase aflJ to yield versiconal (VAL). Versicolorin B synthase aflK then converts VAL to versicolorin B (VERB) by closing the bisfuran ring of aflatoxin which is required for DNA-binding, thus giving to aflatoxin its activity as a mutagen. Then, the activity of the versicolorin B desaturase aflL leads to versicolorin A (VERA). A branch point starts from VERB since it can also be converted to dihydrodemethylsterigmatocystin (DMDHST), probably also by aflL, VERA being a precursor for aflatoxins B1 and G1, and DMDHST for aflatoxins B2 and G2. Next, the versicolorin reductase aflM and the cytochrome P450 monooxygenase aflN are involved in conversion of VERA to demethylsterigmatocystin (DMST). AflX and aflY seem also involved in this step, through probable aflX-mediated epoxide ring-opening step following versicolorin A oxidation and aflY-mediated Baeyer-Villiger oxidation required for the formation of the xanthone ring. The methyltransferase aflO then leads to the modification of DMST to sterigmatocystin (ST), and of DMDHST to dihydrosterigmatocystin (DHST). Both ST and DHST are then substrates of the O-methyltransferase aflP to yield O-methylsterigmatocystin (OMST) and dihydro-O-methylsterigmatocystin (DHOMST), respectively. Finally OMST is converted to aflatoxins B1 and G1, and DHOMST to aflatoxins B2 and G2, via the action of several enzymes including O-methylsterigmatocystin oxidoreductase aflQ, the cytochrome P450 monooxygenase aflU, but also the NADH-dependent flavin oxidoreductase nadA which is specifically required for the synthesis of AFG1. This chain is Versicolorin B synthase, found in Aspergillus parasiticus (strain ATCC 56775 / NRRL 5862 / SRRC 143 / SU-1).